The chain runs to 313 residues: Phosphoenolpyruvate phosphomutase (313 aa).

The segment at 1-23 (MNATERPGSDGTGSPESVGSRLK) is disordered. Asp-69 (nucleophile) is an active-site residue.

The protein belongs to the isocitrate lyase/PEP mutase superfamily. PEP mutase family.

The catalysed reaction is phosphoenolpyruvate + H(+) = 3-phosphonopyruvate. It participates in secondary metabolite biosynthesis; bialaphos biosynthesis. In terms of biological role, formation of a carbon-phosphorus bond by converting phosphoenolpyruvate (PEP) to phosphonopyruvate (P-Pyr). This is Phosphoenolpyruvate phosphomutase (ppm) from Streptomyces viridochromogenes (strain DSM 40736 / JCM 4977 / BCRC 1201 / Tue 494).